The chain runs to 465 residues: Cysteine--tRNA ligase (465 aa).

Cys27 provides a ligand contact to Zn(2+). The short motif at 29–39 (PTVYDDAHLGH) is the 'HIGH' region element. The Zn(2+) site is built by Cys207, His237, and Glu241. The short motif at 269–273 (KMSKS) is the 'KMSKS' region element. An ATP-binding site is contributed by Lys272.

This sequence belongs to the class-I aminoacyl-tRNA synthetase family. Monomer. Zn(2+) is required as a cofactor.

Its subcellular location is the cytoplasm. The enzyme catalyses tRNA(Cys) + L-cysteine + ATP = L-cysteinyl-tRNA(Cys) + AMP + diphosphate. The sequence is that of Cysteine--tRNA ligase from Nitratiruptor sp. (strain SB155-2).